The primary structure comprises 149 residues: Transcription factor HY5-like (149 aa).

The interval Met-1–Lys-77 is disordered. Positions Glu-23–Ala-36 are interaction with COP1. At Ser-24 the chain carries Phosphoserine. Over residues Glu-55–Ser-64 the composition is skewed to polar residues. The bZIP domain maps to Glu-78 to Thr-141. A basic motif region spans residues Arg-80–Lys-100. Residues Leu-106–Leu-134 are leucine-zipper.

It belongs to the bZIP family. As to quaternary structure, heterodimer; heterodimerizes with HY5 via the leucine-zipper domains. Interacts with COP1 WD40 domain. Interacts with BBX24/STO and BBX25/STH. Post-translationally, ubiquitinated by COP1. Ubiquitination takes place in darkness and leads to its subsequent degradation, thereby preventing the activation of photomorphogenesis signals.

The protein localises to the nucleus. Functionally, transcription factor that promotes photomorphogenesis in light. Acts downstream of the light receptor network and directly affects transcription of light-induced genes. Specifically involved in the blue light specific pathway, suggesting that it participates in transmission of cryptochromes (CRY1 and CRY2) signals to downstream responses. In darkness, its degradation prevents the activation of light-induced genes. In Arabidopsis thaliana (Mouse-ear cress), this protein is Transcription factor HY5-like (HYH).